The following is a 202-amino-acid chain: GTP cyclohydrolase 1 (202 aa).

Zn(2+)-binding residues include C90, H93, and C163.

This sequence belongs to the GTP cyclohydrolase I family. In terms of assembly, homomer.

It catalyses the reaction GTP + H2O = 7,8-dihydroneopterin 3'-triphosphate + formate + H(+). It participates in cofactor biosynthesis; 7,8-dihydroneopterin triphosphate biosynthesis; 7,8-dihydroneopterin triphosphate from GTP: step 1/1. This Mycobacterium ulcerans (strain Agy99) protein is GTP cyclohydrolase 1.